Consider the following 498-residue polypeptide: Zinc finger protein 79 (498 aa).

The segment at 1–23 (MLEEGVLPSPGPALPQEENTGEE) is disordered. Residues 38-109 (TFFSSVTVAF…EGEDLRSPSP (72 aa)) form the KRAB domain. 11 C2H2-type zinc fingers span residues 193–215 (YACN…QKSH), 221–243 (YECS…QRIH), 249–271 (YKCS…QRTH), 277–299 (YRCS…QRIH), 305–327 (YECS…QRTH), 333–355 (YKCS…QRIH), 361–383 (YRCA…QRTH), 389–411 (YKCS…QKTH), 417–439 (YKCN…HIIH), 445–467 (YECN…QRIH), and 473–495 (YECS…QRLH).

The protein belongs to the krueppel C2H2-type zinc-finger protein family.

Its subcellular location is the nucleus. Functionally, may be involved in transcriptional regulation. This chain is Zinc finger protein 79 (ZNF79), found in Homo sapiens (Human).